Reading from the N-terminus, the 31-residue chain is Cytochrome b6-f complex subunit 6 (31 aa).

A helical membrane pass occupies residues 4–26 (ITSYFGFLLTALTITSALFIGLS).

Belongs to the PetL family. In terms of assembly, the 4 large subunits of the cytochrome b6-f complex are cytochrome b6, subunit IV (17 kDa polypeptide, PetD), cytochrome f and the Rieske protein, while the 4 small subunits are PetG, PetL, PetM and PetN. The complex functions as a dimer.

Its subcellular location is the plastid. It is found in the chloroplast thylakoid membrane. Its function is as follows. Component of the cytochrome b6-f complex, which mediates electron transfer between photosystem II (PSII) and photosystem I (PSI), cyclic electron flow around PSI, and state transitions. PetL is important for photoautotrophic growth as well as for electron transfer efficiency and stability of the cytochrome b6-f complex. The chain is Cytochrome b6-f complex subunit 6 from Lactuca sativa (Garden lettuce).